A 91-amino-acid polypeptide reads, in one-letter code: Probable Fe(2+)-trafficking protein (91 aa).

This sequence belongs to the Fe(2+)-trafficking protein family.

In terms of biological role, could be a mediator in iron transactions between iron acquisition and iron-requiring processes, such as synthesis and/or repair of Fe-S clusters in biosynthetic enzymes. The chain is Probable Fe(2+)-trafficking protein from Burkholderia mallei (strain NCTC 10247).